Here is a 419-residue protein sequence, read N- to C-terminus: Phospholipase A1-IIgamma (419 aa).

2 coiled-coil regions span residues 1–21 (MKRK…EFAK) and 207–227 (NARD…KDEE). Serine 236 (acyl-ester intermediate) is an active-site residue. Active-site charge relay system residues include serine 236, aspartate 302, and histidine 339.

Belongs to the AB hydrolase superfamily. Lipase family. Expressed in seedlings, stems and siliques, and, to a lower extent, in flowers.

Its subcellular location is the cytoplasm. In terms of biological role, acylhydrolase that catalyzes the hydrolysis of 1,3-diacylglycerol (1,3-DAG) and 1-monoacylglycerol (1-MAG) at the sn-1 position. High activity toward 1,3-DAG and 1-MAG, but low activity toward 1,2-diacylglycerol (1,2-DAG) and 1-lysophosphatidylcholine (1-LPC), and no activity toward phosphatidylcholine (PC), monogalactosyldiacylglycerol (MGDG), digalactosyldiacylglycerol (DGDG), triacylglycerol (TAG) and 2-monoacylglycerol (2-MAG). May be involved in the negative regulation of seedling establishment by inhibiting the breakdown, beta-oxidation and mobilization of seed storage oils. This Arabidopsis thaliana (Mouse-ear cress) protein is Phospholipase A1-IIgamma (DSEL).